Consider the following 449-residue polypeptide: Allantoinase (449 aa).

Residues H61, H63, K148, H184, H240, and D313 each coordinate Zn(2+). K148 carries the post-translational modification N6-carboxylysine.

This sequence belongs to the metallo-dependent hydrolases superfamily. Allantoinase family. In terms of assembly, homotetramer. Requires Zn(2+) as cofactor. Post-translationally, carboxylation allows a single lysine to coordinate two zinc ions.

It catalyses the reaction (S)-allantoin + H2O = allantoate + H(+). It functions in the pathway nitrogen metabolism; (S)-allantoin degradation; allantoate from (S)-allantoin: step 1/1. Functionally, catalyzes the conversion of allantoin (5-ureidohydantoin) to allantoic acid by hydrolytic cleavage of the five-member hydantoin ring. This Desulfitobacterium hafniense (strain DSM 10664 / DCB-2) protein is Allantoinase.